Consider the following 313-residue polypeptide: tRNA uridine(34) hydroxylase (313 aa).

Residues 124–218 form the Rhodanese domain; sequence SDPEVLLIDT…YLEEVPQQES (95 aa). The Cysteine persulfide intermediate role is filled by cysteine 178.

Belongs to the TrhO family.

It catalyses the reaction uridine(34) in tRNA + AH2 + O2 = 5-hydroxyuridine(34) in tRNA + A + H2O. Functionally, catalyzes oxygen-dependent 5-hydroxyuridine (ho5U) modification at position 34 in tRNAs. The chain is tRNA uridine(34) hydroxylase from Pseudomonas fluorescens (strain ATCC BAA-477 / NRRL B-23932 / Pf-5).